A 125-amino-acid chain; its full sequence is Fumarate reductase subunit D (125 aa).

The next 3 helical transmembrane spans lie at Val29–Trp49, Asn64–His84, and Val102–Leu122.

This sequence belongs to the FrdD family. As to quaternary structure, part of an enzyme complex containing four subunits: a flavoprotein (FrdA), an iron-sulfur protein (FrdB), and two hydrophobic anchor proteins (FrdC and FrdD).

It localises to the cell membrane. Its function is as follows. Anchors the catalytic components of the fumarate reductase complex to the cell membrane, binds quinones. This chain is Fumarate reductase subunit D, found in Mycobacterium bovis (strain BCG / Tokyo 172 / ATCC 35737 / TMC 1019).